The primary structure comprises 968 residues: Angiomotin-like protein 1 (968 aa).

Polar residues-rich tracts occupy residues 152 to 164 (VYQS…QGQE) and 177 to 187 (RSTQPQQNNEE). A disordered region spans residues 152–258 (VYQSARQEPQ…NRANSGQAHK (107 aa)). Positions 203–224 (GQQQQQQQQQQQQQQQQQQGQG) are enriched in low complexity. Residues Ser253, Ser281, and Ser307 each carry the phosphoserine modification. Positions 271-291 (RSLSERIMQLSLERNGAKQHL) form a coiled coil. Positions 285–343 (NGAKQHLPSSGNGKSFKAGGEPSPAQPVCKALDPRGPPPEYPFKTKPMKSPVSKNQDHG) are disordered. Coiled-coil stretches lie at residues 449–645 (VERA…RRLR) and 676–705 (ALME…YLEE). Residues 721 to 742 (AERDTTISNHSRNGSYGESSLE) are disordered. Polar residues predominate over residues 726–738 (TISNHSRNGSYGE). Phosphoserine is present on Ser731. Positions 748-773 (EEEEVVQANRRCQDMEYTIKNLHAKI) form a coiled coil. Positions 785–834 (QRSRKDAGKTDSASLRPARSVPSIAAATGTHSRQTSLTSSQLTEEKKEEK) are disordered. Phosphoserine is present on residues Ser804, Ser816, and Ser840. A compositionally biased stretch (low complexity) spans 853-878 (ASAPLLPTTPASALSLPASTTSASST). Residues 853-956 (ASAPLLPTTP…GRVSNLLHKP (104 aa)) form a disordered region. 2 positions are modified to phosphoserine: Ser912 and Ser918. The short motif at 965–968 (EVLI) is the PDZ-binding element.

The protein belongs to the angiomotin family. In terms of processing, polyubiquitinated by NEDD4, leading to proteasomal degradation. Expressed in exocrine glands, including pancreas, submandibular gland, lacrimal gland, parotid gland and sublingual gland (at protein level).

The protein resides in the cell junction. The protein localises to the tight junction. Its function is as follows. Inhibits the Wnt/beta-catenin signaling pathway, probably by recruiting CTNNB1 to recycling endosomes and hence preventing its translocation to the nucleus. In Mus musculus (Mouse), this protein is Angiomotin-like protein 1 (Amotl1).